The sequence spans 131 residues: Small ribosomal subunit protein uS8 (131 aa).

Belongs to the universal ribosomal protein uS8 family. In terms of assembly, part of the 30S ribosomal subunit. Contacts proteins S5 and S12.

Functionally, one of the primary rRNA binding proteins, it binds directly to 16S rRNA central domain where it helps coordinate assembly of the platform of the 30S subunit. The sequence is that of Small ribosomal subunit protein uS8 from Dechloromonas aromatica (strain RCB).